Reading from the N-terminus, the 529-residue chain is Low affinity inorganic phosphate transporter 5 (529 aa).

The Cytoplasmic portion of the chain corresponds to 1–21 (MASNNLNVLNALDTAHTQWYH). Residues 22-42 (VTAVVIAGMGFFTDAYDLFCI) form a helical membrane-spanning segment. The Extracellular segment spans residues 43–71 (STISKLLGRLYYYDPHTHAPGKLPHTVNN). Residues 72-92 (WVTGVALVGTLTGQLVFGWLG) form a helical membrane-spanning segment. The Cytoplasmic segment spans residues 93-99 (DKLGRKK). The chain crosses the membrane as a helical span at residues 100–120 (VYGLTLILMVICALSSGLSFG). The Extracellular portion of the chain corresponds to 121 to 124 (YSRK). A helical transmembrane segment spans residues 125 to 145 (VVIGTLCFFRFWLGFGIGGDY). The Cytoplasmic portion of the chain corresponds to 146–163 (PLSATIMSEYANKRTRGA). A helical transmembrane segment spans residues 164–184 (FIAAVFAMQGVGIIFAGLVLM). Residues 185–211 (TVSKVFLMRYAGKAFSTDEVFSTEPEA) are Extracellular-facing. The helical transmembrane segment at 212 to 232 (DYVWRIVLMLGALPALLTYYW) threads the bilayer. The Cytoplasmic segment spans residues 233–291 (RMKMPETGRYTAIIEGNAKQAAIDMGKVLEIEIQAEGEKLAKFKSANDYSLLSNEFFQR). Residues 292–312 (HGLHLIGTMSTWFLLDIAFYS) form a helical membrane-spanning segment. At 313 to 344 (QNLTQKDIFPTMGLVSDAKSISALREMFETSR) the chain is on the extracellular side. Asparagine 314 carries an N-linked (GlcNAc...) asparagine glycan. Residues 345 to 365 (AMFVIALLGTFPGYWFTVFFI) form a helical membrane-spanning segment. Topologically, residues 366–374 (EKIGRFKIQ) are cytoplasmic. A helical membrane pass occupies residues 375–395 (LMGFFMMSIFMAIIGVRYDYL). Topologically, residues 396-405 (KTKDHKWTFA) are extracellular. The chain crosses the membrane as a helical span at residues 406–426 (ALYGLTFFFANSGPNSTTFVL). At 427–472 (PAELFPTRVRSTCHALSAASGKAGAMVSAFGVQQYTQDGEVHKIKK) the chain is on the cytoplasmic side. The helical transmembrane segment at 473-493 (AMLFLAFTNMVGFCCTFLVTE) threads the bilayer. Topologically, residues 494 to 529 (TKGRSLEEISGEDENQNETKMKGRPVSGGHQDDGWD) are extracellular. A disordered region spans residues 500–529 (EEISGEDENQNETKMKGRPVSGGHQDDGWD). Asparagine 510 carries an N-linked (GlcNAc...) asparagine glycan.

This sequence belongs to the major facilitator superfamily. Phosphate:H(+) symporter (TC 2.A.1.9) family. As to expression, expressed at low levels in non-mycorrhized roots.

The protein resides in the cell membrane. It carries out the reaction phosphate(in) + H(+)(in) = phosphate(out) + H(+)(out). Functionally, low-affinity transporter for external inorganic phosphate (Pi) probably involved in the acquisition of phosphate released by arbuscular mycorrhizal (AM) fungi during AM symbiosis. In Petunia hybrida (Petunia), this protein is Low affinity inorganic phosphate transporter 5.